The chain runs to 90 residues: Small ribosomal subunit protein bS16 (90 aa).

It belongs to the bacterial ribosomal protein bS16 family.

This Geobacillus sp. (strain WCH70) protein is Small ribosomal subunit protein bS16.